We begin with the raw amino-acid sequence, 647 residues long: DNA mismatch repair protein MutL (647 aa).

A disordered region spans residues 346–378; it reads QTVHAPRSAAPRVSERASDEPPAWQPSPTSGEP.

The protein belongs to the DNA mismatch repair MutL/HexB family.

Functionally, this protein is involved in the repair of mismatches in DNA. It is required for dam-dependent methyl-directed DNA mismatch repair. May act as a 'molecular matchmaker', a protein that promotes the formation of a stable complex between two or more DNA-binding proteins in an ATP-dependent manner without itself being part of a final effector complex. The polypeptide is DNA mismatch repair protein MutL (Limosilactobacillus fermentum (strain NBRC 3956 / LMG 18251) (Lactobacillus fermentum)).